Reading from the N-terminus, the 624-residue chain is Vitamin B12 transporter BtuB (624 aa).

The first 21 residues, 1–21, serve as a signal peptide directing secretion; the sequence is MTIKKYTLLTALSVTAFSGWA. Positions 31–38 match the TonB box motif; the sequence is NEMVVTAN. The 115-residue stretch at 43–157 folds into the TBDR plug domain; the sequence is PKSSVLAPVD…IGGVVNIITE (115 aa). Residues L88, S90, N97, and 115 to 116 each bind cyanocob(III)alamin; that span reads IS. A TBDR beta-barrel domain is found at 160–624; sequence TLGSTLTAGL…EYYFTGSYNF (465 aa). 3 beta stranded membrane-spanning segments follow: residues 163–170, 174–183, and 189–200; these read STLTAGLG, YQNYNGSTQQ, and TTITLAGNYDYS. 4 residues coordinate Ca(2+): D204, Q216, D218, and D220. 2 consecutive transmembrane segments (beta stranded) span residues 222-232 and 237-253; these read YLGKMLWLGAN and EQFS…NRSD. Ca(2+) is bound by residues Y254, D255, and D266. 17 beta stranded membrane passes run 268-282, 284-301, 314-330, 333-342, 358-374, 376-386, 390-405, 408-422, 440-449, 455-464, 481-498, 502-517, 525-537, 543-557, 568-582, 595-606, and 612-624; these read RSLS…INFS, GGYA…QDYN, TLDD…NTYQ, LGNVGGGLDW, YEQR…QFVG, VTLEGAIRGDD, FGWH…WEFV, YRLI…KAPN, ESTQWEAAIT, LDWRLSAYRN, YYNV…TGSF, PLSH…PRNA, RRAK…QLDW, DWSV…RYDS, PVKL…LAVS, IANLFDKDYEMV, and PGRE…SYNF. T314 contacts cyanocob(III)alamin. Cyanocob(III)alamin is bound at residue R525. The short motif at 607–624 is the TonB C-terminal box element; the sequence is YGYQTPGREYYFTGSYNF.

The protein belongs to the TonB-dependent receptor family. BtuB (TC 1.B.14.3.1) subfamily.

The protein resides in the cell outer membrane. Its function is as follows. Involved in the active translocation of vitamin B12 (cyanocobalamin) across the outer membrane to the periplasmic space. It derives its energy for transport by interacting with the trans-periplasmic membrane protein TonB. This is Vitamin B12 transporter BtuB from Yersinia pseudotuberculosis serotype O:1b (strain IP 31758).